We begin with the raw amino-acid sequence, 217 residues long: tRNA (guanine-N(7)-)-methyltransferase (217 aa).

E46, E71, D98, and D120 together coordinate S-adenosyl-L-methionine. Residue D120 is part of the active site. Position 124 (K124) interacts with substrate. The tract at residues 126–131 is interaction with RNA; that stretch reads RHEKRR. Substrate is bound by residues D156 and 196 to 199; that span reads TEYE.

This sequence belongs to the class I-like SAM-binding methyltransferase superfamily. TrmB family.

It carries out the reaction guanosine(46) in tRNA + S-adenosyl-L-methionine = N(7)-methylguanosine(46) in tRNA + S-adenosyl-L-homocysteine. The protein operates within tRNA modification; N(7)-methylguanine-tRNA biosynthesis. Catalyzes the formation of N(7)-methylguanine at position 46 (m7G46) in tRNA. In Lactobacillus gasseri (strain ATCC 33323 / DSM 20243 / BCRC 14619 / CIP 102991 / JCM 1131 / KCTC 3163 / NCIMB 11718 / NCTC 13722 / AM63), this protein is tRNA (guanine-N(7)-)-methyltransferase.